The sequence spans 348 residues: NADH-quinone oxidoreductase subunit H (348 aa).

A run of 9 helical transmembrane segments spans residues 13–33 (LIMVGQSLLLLVCLLVAIAFL), 50–70 (PNVVGPFGLFQSFADLLKFIL), 82–102 (AVFLLAPLVAVTLALATYAVI), 115–135 (VGILYIFAISSLEVYGIIMGG), 161–181 (IGLVIVTVLLCVGSLNLTDIV), 198–218 (FLDWHWLSLFPMFIVFFISGL), 258–278 (AIVLICCLTTILFLGGWLPIV), 285–305 (WVPGIVWFALKGCMVFFMIAL), and 321–341 (LGWKVFLPLSLAMVVIVAFVL).

It belongs to the complex I subunit 1 family. As to quaternary structure, NDH-1 is composed of 14 different subunits. Subunits NuoA, H, J, K, L, M, N constitute the membrane sector of the complex.

Its subcellular location is the cell inner membrane. The enzyme catalyses a quinone + NADH + 5 H(+)(in) = a quinol + NAD(+) + 4 H(+)(out). NDH-1 shuttles electrons from NADH, via FMN and iron-sulfur (Fe-S) centers, to quinones in the respiratory chain. The immediate electron acceptor for the enzyme in this species is believed to be ubiquinone. Couples the redox reaction to proton translocation (for every two electrons transferred, four hydrogen ions are translocated across the cytoplasmic membrane), and thus conserves the redox energy in a proton gradient. This subunit may bind ubiquinone. This is NADH-quinone oxidoreductase subunit H from Agrobacterium fabrum (strain C58 / ATCC 33970) (Agrobacterium tumefaciens (strain C58)).